The following is a 260-amino-acid chain: Snake venom serine protease serpentokallikrein-1 (260 aa).

Positions 1 to 18 (MVLIRVLANLLILQLSYA) are cleaved as a signal peptide. The propeptide occupies 19–24 (QRTSEL). Residues 25 to 251 (VIGGDECNIN…HLDWIKSIIA (227 aa)) form the Peptidase S1 domain. Cystine bridges form between Cys-31–Cys-165, Cys-52–Cys-68, Cys-102–Cys-258, Cys-144–Cys-212, Cys-176–Cys-191, and Cys-202–Cys-227. His-67 acts as the Charge relay system in catalysis. Asn-81 and Asn-105 each carry an N-linked (GlcNAc...) asparagine glycan. The active-site Charge relay system is the Asp-112. Residues Asn-156 and Asn-172 are each glycosylated (N-linked (GlcNAc...) asparagine). Residue Ser-206 is the Charge relay system of the active site.

The protein belongs to the peptidase S1 family. Snake venom subfamily. As to quaternary structure, monomer. Expressed by the venom gland.

The protein resides in the secreted. Functionally, snake venom serine protease that may act in the hemostasis system of the prey. This Protobothrops mucrosquamatus (Taiwan habu) protein is Snake venom serine protease serpentokallikrein-1.